Consider the following 975-residue polypeptide: NLR family member X1 (975 aa).

A mitochondrion-targeting transit peptide spans Met1 to Leu86. The tract at residues Ala75–Ile556 is required for interaction with MAVS. An NACHT domain is found at Gln160–Glu483. Residue Gly166–Ser173 coordinates ATP. Residues Ile556–Gly974 form a required for the repression of MAVS-induced interferon signaling region. Positions Arg667–Val694 constitute an LRRNT domain. 8 LRR repeats span residues Leu695 to Ala718, Arg724 to Pro747, Phe749 to Asp777, Gln778 to Glu801, His811 to Asn834, Arg835 to Arg857, Ala858 to Ser877, and Glu878 to Ser899. Residues Val906–Leu970 form the LRRCT domain.

This sequence belongs to the NLRP family. Homohexamer. Interacts with MAVS. Interacts with TUFM. As to quaternary structure, (Microbial infection) Interacts with influenza A virus protein PB1-F2. In terms of tissue distribution, ubiquitously expressed. Strongest expression in mammary gland, heart and muscle. Detected in HeLa, HEK293T, THP-1, HL-60, Raji and Jurkat cell lines (at protein level).

The protein localises to the mitochondrion outer membrane. Its function is as follows. Participates in antiviral signaling. Acts as a negative regulator of MAVS-mediated antiviral responses, through the inhibition of the virus-induced RLH (RIG-like helicase)-MAVS interaction. Instead, promotes autophagy by interacting with TUFM and subsequently recruiting the autophagy-related proteins ATG5 and ATG12. Also regulates MAVS-dependent NLRP3 inflammasome activation to attenuate apoptosis. Has no inhibitory function on NF-kappa-B signaling pathway, but enhances NF-kappa-B and JUN N-terminal kinase dependent signaling through the production of reactive oxygen species. Regulates viral mediated-inflammation and energy metabolism in a sex-dependent manner. In females, prevents uncontrolled inflammation and energy metabolism and thus, may contribute to the sex differences observed in infectious and inflammatory diseases. In Homo sapiens (Human), this protein is NLR family member X1 (NLRX1).